Reading from the N-terminus, the 129-residue chain is Large ribosomal subunit protein bL12c (129 aa).

The protein belongs to the bacterial ribosomal protein bL12 family. Homodimer. Part of the ribosomal stalk of the 50S ribosomal subunit. Forms a multimeric L10(L12)X complex, where L10 forms an elongated spine to which 2 to 4 L12 dimers bind in a sequential fashion. Binds GTP-bound translation factors.

It localises to the plastid. The protein localises to the chloroplast. Forms part of the ribosomal stalk which helps the ribosome interact with GTP-bound translation factors. Is thus essential for accurate translation. This is Large ribosomal subunit protein bL12c from Porphyra purpurea (Red seaweed).